We begin with the raw amino-acid sequence, 237 residues long: Purine nucleoside phosphorylase DeoD-type (237 aa).

His4 is a binding site for a purine D-ribonucleoside. Phosphate-binding positions include Gly20, Arg24, Arg43, and 87–90 (RVGT). Residues 179–181 (EME) and 203–204 (SD) each bind a purine D-ribonucleoside. Catalysis depends on Asp204, which acts as the Proton donor.

This sequence belongs to the PNP/UDP phosphorylase family. As to quaternary structure, homohexamer; trimer of homodimers.

The catalysed reaction is a purine D-ribonucleoside + phosphate = a purine nucleobase + alpha-D-ribose 1-phosphate. It carries out the reaction a purine 2'-deoxy-D-ribonucleoside + phosphate = a purine nucleobase + 2-deoxy-alpha-D-ribose 1-phosphate. In terms of biological role, catalyzes the reversible phosphorolytic breakdown of the N-glycosidic bond in the beta-(deoxy)ribonucleoside molecules, with the formation of the corresponding free purine bases and pentose-1-phosphate. This is Purine nucleoside phosphorylase DeoD-type from Streptococcus gordonii (strain Challis / ATCC 35105 / BCRC 15272 / CH1 / DL1 / V288).